Here is a 238-residue protein sequence, read N- to C-terminus: Uridylate kinase (238 aa).

An ATP-binding site is contributed by 12-15; it reads KVSG. Gly-54 is a UMP binding site. ATP-binding residues include Gly-55 and Arg-59. Residues Asp-74 and 135–142 contribute to the UMP site; that span reads TGNPYFTT. Residues Thr-162, Asn-163, Tyr-168, and Asp-171 each contribute to the ATP site.

It belongs to the UMP kinase family. As to quaternary structure, homohexamer.

The protein localises to the cytoplasm. The catalysed reaction is UMP + ATP = UDP + ADP. It participates in pyrimidine metabolism; CTP biosynthesis via de novo pathway; UDP from UMP (UMPK route): step 1/1. Its activity is regulated as follows. Inhibited by UTP. Catalyzes the reversible phosphorylation of UMP to UDP. The protein is Uridylate kinase of Azorhizobium caulinodans (strain ATCC 43989 / DSM 5975 / JCM 20966 / LMG 6465 / NBRC 14845 / NCIMB 13405 / ORS 571).